Consider the following 185-residue polypeptide: Dioxygenase easH (185 aa).

Residues H17, D19, and H93 each contribute to the Fe cation site.

The protein belongs to the PhyH family. In terms of assembly, homodimer. The cofactor is Fe cation.

The protein operates within alkaloid biosynthesis; ergot alkaloid biosynthesis. Dioxygenase; part of the gene cluster that mediates the biosynthesis of fungal ergot alkaloid ergovaline, the predominant ergopeptine product in E.festucae var. lolii. DmaW catalyzes the first step of ergot alkaloid biosynthesis by condensing dimethylallyl diphosphate (DMAP) and tryptophan to form 4-dimethylallyl-L-tryptophan. The second step is catalyzed by the methyltransferase easF that methylates 4-dimethylallyl-L-tryptophan in the presence of S-adenosyl-L-methionine, resulting in the formation of 4-dimethylallyl-L-abrine. The catalase easC and the FAD-dependent oxidoreductase easE then transform 4-dimethylallyl-L-abrine to chanoclavine-I which is further oxidized by easD in the presence of NAD(+), resulting in the formation of chanoclavine-I aldehyde. Agroclavine dehydrogenase easG then mediates the conversion of chanoclavine-I aldehyde to agroclavine via a non-enzymatic adduct reaction: the substrate is an iminium intermediate that is formed spontaneously from chanoclavine-I aldehyde in the presence of glutathione. The presence of easA is not required to complete this reaction. Further conversion of agroclavine to paspalic acid is a two-step process involving oxidation of agroclavine to elymoclavine and of elymoclavine to paspalic acid, the second step being performed by the elymoclavine oxidase cloA. Paspalic acid is then further converted to D-lysergic acid. Ergovaline is assembled from D-lysergic acid and three different amino acids by the D-lysergyl-peptide-synthetase composed of a monomudular (lpsB) and a trimodular (lpsA) nonribosomal peptide synthetase subunit. This chain is Dioxygenase easH, found in Epichloe festucae var. lolii (Neotyphodium lolii).